Consider the following 207-residue polypeptide: Large ribosomal subunit protein uL4 (207 aa).

The tract at residues K50 to G76 is disordered.

This sequence belongs to the universal ribosomal protein uL4 family. As to quaternary structure, part of the 50S ribosomal subunit.

One of the primary rRNA binding proteins, this protein initially binds near the 5'-end of the 23S rRNA. It is important during the early stages of 50S assembly. It makes multiple contacts with different domains of the 23S rRNA in the assembled 50S subunit and ribosome. Functionally, forms part of the polypeptide exit tunnel. The chain is Large ribosomal subunit protein uL4 from Rickettsia typhi (strain ATCC VR-144 / Wilmington).